Consider the following 146-residue polypeptide: MGRSIFSFFTKKKKMAMARSISYITSTQLLPLHRRPNIAIIDVRDEERNYDGHIAGSLHYASGSFDDKISHLVQNVKDKDTLVFHCALSQVRGPTCARRLVNYLDEKKEDTGIKNIMILERGFNGWEASGKPVCRCAEVPCKGDCA.

The 102-residue stretch at 34–135 folds into the Rhodanese domain; that stretch reads RRPNIAIIDV…WEASGKPVCR (102 aa). Substrate is bound at residue 45-48; sequence DEER. Residue H53 coordinates Zn(2+). 68–71 contributes to the substrate binding site; that stretch reads KISH. The active-site Cysteine persulfide intermediate is the C86. 90–92 serves as a coordination point for substrate; sequence QVR. Residues C134, C136, and C141 each coordinate Zn(2+).

Belongs to the MPI phosphatase family. Expressed in roots and at lower levels in shoots (at protein level). Expressed in leaves, stems and flowers.

The protein resides in the nucleus. It catalyses the reaction O-phospho-L-tyrosyl-[protein] + H2O = L-tyrosyl-[protein] + phosphate. It carries out the reaction [glutaredoxin]-dithiol + arsenate + glutathione + H(+) = glutathionyl-S-S-[glutaredoxin] + arsenite + H2O. Inhibited by NSC95397. Functionally, tyrosine protein phosphatase that dephosphorylates CDK complex and activate its kinase activity in vitro. Arsenate reductase that plays a major role in the reduction of arsenate to arsenite and arsenic retention in roots. Has an in vitro and in vivo arsenate reductase activity. Plays no role in arsenic metabolism. The protein is Dual specificity phosphatase Cdc25 of Arabidopsis thaliana (Mouse-ear cress).